Consider the following 4576-residue polypeptide: Mucin-2 (4576 aa).

The N-terminal stretch at 1-20 (MGLPLARLVAACLVLALAKG) is a signal peptide. The residue at position 21 (Ser-21) is a Phosphoserine. Positions 32–205 (HVCSTWGDFH…KINKPEVQCE (174 aa)) constitute a VWFD 1 domain. Disulfide bonds link Cys-34/Cys-166, Cys-56/Cys-204, Cys-64/Cys-163, Cys-216/Cys-253, Cys-223/Cys-248, Cys-235/Cys-273, Cys-255/Cys-261, Cys-263/Cys-289, Cys-293/Cys-327, Cys-306/Cys-319, Cys-310/Cys-349, Cys-329/Cys-343, Cys-351/Cys-373, Cys-368/Cys-385, Cys-371/Cys-380, Cys-389/Cys-526, Cys-411/Cys-561, Cys-433/Cys-441, Cys-572/Cys-617, Cys-586/Cys-612, Cys-599/Cys-637, Cys-619/Cys-625, Cys-627/Cys-652, Cys-659/Cys-696, Cys-672/Cys-686, Cys-676/Cys-716, Cys-698/Cys-710, Cys-718/Cys-740, and Cys-738/Cys-747. Position 46 (Asp-46) interacts with Ca(2+). Cu(+) is bound by residues Met-143 and Met-151. Glu-153 is a binding site for Cu(2+). Asn-160 carries N-linked (GlcNAc...) asparagine glycosylation. 3 residues coordinate Ca(2+): Asp-168, Asn-170, and Glu-177. His-275 lines the Cu(2+) pocket. The 57-residue stretch at 293-349 (CPNNMVYLESSSPCVDTCSHLEVSSLCEEHYMDGCFCPEGTVYDDITGSGCIPVSQC) folds into the TIL domain. His-322 contacts Cu(2+). Cu(+) is bound at residue Met-324. Residues 387-562 (ETCALEGGSH…NTWKAQSSCH (176 aa)) enclose the VWFD 2 domain. Asp-401 lines the Ca(2+) pocket. Asn-421 carries an N-linked (GlcNAc...) asparagine glycan. Ca(2+)-binding residues include Asn-528, Asn-530, Leu-532, Asp-535, and Asp-536. Residue Asn-668 is glycosylated (N-linked (GlcNAc...) asparagine). A glycan (N-linked (GlcNAc...) asparagine) is linked at Asn-768. Intrachain disulfides connect Cys-782–Cys-818, Cys-800–Cys-812, Cys-820–Cys-843, Cys-837–Cys-855, Cys-841–Cys-850, Cys-859–Cys-990, Cys-881–Cys-1025, Cys-890–Cys-987, Cys-907–Cys-914, Cys-1035–Cys-1078, Cys-1049–Cys-1073, Cys-1060–Cys-1100, Cys-1080–Cys-1088, Cys-1090–Cys-1115, Cys-1106–Cys-1135, Cys-1119–Cys-1161, Cys-1143–Cys-1185, Cys-1165–Cys-1179, Cys-1187–Cys-1211, Cys-1206–Cys-1236, and Cys-1209–Cys-1219. An N-linked (GlcNAc...) asparagine glycan is attached at Asn-838. Residues 857–1026 (STCSIYGSGH…NSWKEASTCP (170 aa)) enclose the VWFD 3 domain. Asp-871 is a Ca(2+) binding site. Residue Asn-893 is glycosylated (N-linked (GlcNAc...) asparagine). 4 residues coordinate Ca(2+): Asn-992, Asp-994, Asn-999, and Asp-1000. Residues Asn-1137 and Asn-1152 are each glycosylated (N-linked (GlcNAc...) asparagine). 3 N-linked (GlcNAc...) asparagine glycosylation sites follow: Asn-1213, Asn-1228, and Asn-1244. 5 O-linked (GalNAc) threonine glycosylation sites follow: Thr-1265, Thr-1268, Thr-1269, Thr-1281, and Thr-1292. 5 residues coordinate Ca(2+): Asn-1305, His-1308, Gly-1315, Asp-1316, and Glu-1318. Asn-1352 carries N-linked (GlcNAc...) asparagine glycosylation. Positions 1375 and 1376 each coordinate Ca(2+). 5 tandem repeats follow at residues 1395 to 1415 (SPTT…PTTL), 1416 to 1427 (PTSSPVTSSATL), 1428 to 1437 (PTTSSITSTI), 1438 to 1453 (SPTT…SPTT), and 1454 to 1460 (SPTTSPT). The tract at residues 1395-2866 (SPTTSTTTLS…PTTSSTFTTP (1472 aa)) is disordered. The stretch at 1478–1497 (PSTTSPTTPSTTPSTTSPTT) is one 7B repeat. The stretch at 1498-1510 (PSTTSPTTPTSTS) is one 8A repeat. The stretch at 1530 to 1556 (SPTTSPTTPSTTSPTISTTTSTISPTT) is one 9B repeat. One copy of the 10A repeat lies at 1557-1572 (PSTTSPNTPSTTSSTI). A 10B repeat occupies 1573-1588 (PSTTSPTTPSTTSPTI). An 11A repeat occupies 1589 to 1607 (STTTSTTSPTTPSTTSPTT). One copy of the 11B repeat lies at 1608–1634 (PSTTSPTTPSTTSPTISTTTLTTSPTT). 2 tandem repeats follow at residues 1635-1642 (PSTTSPTT) and 1665-1681 (ISPT…LSTT). Residues Asn-2529 and Asn-2910 are each glycosylated (N-linked (GlcNAc...) asparagine). 2 stretches are compositionally biased toward low complexity: residues 2975-3623 (PSST…GSTP) and 3631-3706 (PGPT…TSPS). Residues 2975 to 3706 (PSSTTTETPT…SSTSPITSPS (732 aa)) form a disordered region. Residues Asn-3734, Asn-3745, and Asn-3756 are each glycosylated (N-linked (GlcNAc...) asparagine). Residues 3764 to 3774 (STPTPSTPTPT) show a composition bias toward pro residues. Residues 3764 to 3806 (STPTPSTPTPTPSQTTTPSTTSSKSTPSTPQSTSPKSTLSTPT) are disordered. A compositionally biased stretch (low complexity) spans 3775 to 3806 (PSQTTTPSTTSSKSTPSTPQSTSPKSTLSTPT). N-linked (GlcNAc...) asparagine glycans are attached at residues Asn-3823, Asn-3830, and Asn-3903. Positions 3880–4063 (CYCTGWGDPH…VNDPSKPHCP (184 aa)) constitute a VWFD 4 domain. 3 disulfide bridges follow: Cys-3882-Cys-4023, Cys-3904-Cys-4062, and Cys-3928-Cys-3936. N-linked (GlcNAc...) asparagine glycosylation is found at Asn-3991, Asn-4017, Asn-4028, Asn-4083, Asn-4149, Asn-4183, Asn-4254, Asn-4277, Asn-4351, Asn-4366, Asn-4434, Asn-4465, and Asn-4488. VWFC domains lie at 4213–4282 (CVGP…TSCK) and 4320–4387 (GVCV…KKCQ). Disulfide bonds link Cys-4471–Cys-4518, Cys-4485–Cys-4532, Cys-4494–Cys-4548, and Cys-4498–Cys-4550. The 86-residue stretch at 4471 to 4556 (CSAVSVMKEI…SCLCQDTVCG (86 aa)) folds into the CTCK domain.

Homomultimer; disulfide-linked. The N- and C-terminus mediate their assembly into higher order structures to form filaments. The CTCK domains of two polypeptides associate in the endoplasmic reticulum to generate intermolecularly disulfide-bonded dimers. These dimers progress to the Golgi apparatus, which is a more acidic environment than the endoplasmic reticulum. Under acidic conditions, the N-termini form non-covalent intermolecular interactions that juxtapose assemblies of the third VWD domain (VWD3) from different CTCK-linked dimers. The VWD3 assemblies then become disulfide bonded to one another to produce long, disulfide-linked polymers that remain highly compact until secretion. Interacts with FCGBP. Interacts with AGR2; disulfide-linked. O-glycosylated. O-glycosylation is required for mucin assembly. Goblet cells synthesize two forms of mucin that differ in branched chain O-glycosylation and the site of production in the colon. In terms of processing, may undergo proteolytic cleavage in the outer mucus layer of the colon, contributing to the expanded volume and loose nature of this layer which allows for bacterial colonization in contrast to the inner mucus layer which is dense and devoid of bacteria. Post-translationally, at low pH of 6 and under, undergoes autocatalytic cleavage in vitro in the N-terminal region of the fourth VWD domain. It is likely that this also occurs in vivo and is triggered by the low pH of the late secretory pathway. As to expression, highly expressed in goblet cells of the colon with lower levels in the small intestine and no expression in the stomach (at protein level).

It localises to the secreted. In terms of biological role, coats the epithelia of the intestines and other mucus membrane-containing organs to provide a protective, lubricating barrier against particles and infectious agents at mucosal surfaces. Major constituent of the colon mucus, which is mainly formed by large polymeric networks of MUC2 secreted by goblet cells that cover the exposed surfaces of intestine. MUC2 networks form hydrogels that guard the underlying epithelium from pathogens and other hazardous matter entering from the outside world, while permitting nutrient absorption and gas exchange. Acts as a divalent copper chaperone that protects intestinal cells from copper toxicity and facilitates nutritional copper unptake into cells. Binds both Cu(2+) and its reduced form, Cu(1+), at two juxtaposed binding sites: Cu(2+), once reduced to Cu(1+) by vitamin C (ascorbate) or other dietary antioxidants, transits to the other binding site. MUC2-bound Cu(1+) is protected from oxidation in aerobic environments, and can be released for nutritional delivery to cells. Mucin gels store antimicrobial molecules that participate in innate immunity. Mucin glycoproteins also house and feed the microbiome, lubricate tissue surfaces, and may facilitate the removal of contaminants and waste products from the body. Goblet cells synthesize two forms of MUC2 mucin that differ in branched chain O-glycosylation and the site of production in the colon: a (1) 'thick' mucus that wraps the microbiota to form fecal pellets is produced in the proximal, ascending colon. 'Thick' mucus transits along the descending colon and is lubricated by a (2) 'thin' MUC2 mucus produced in the distal colon which adheres to the 'thick' mucus. This chain is Mucin-2, found in Mus musculus (Mouse).